The primary structure comprises 241 residues: Uridylate kinase (241 aa).

Residue 14-17 participates in ATP binding; that stretch reads KLSG. Gly-56 provides a ligand contact to UMP. The ATP site is built by Gly-57 and Arg-61. UMP-binding positions include Asp-77 and 138-145; that span reads TGNPFFTT. Thr-165, Tyr-171, and Asp-174 together coordinate ATP.

This sequence belongs to the UMP kinase family. In terms of assembly, homohexamer.

The protein resides in the cytoplasm. It catalyses the reaction UMP + ATP = UDP + ADP. The protein operates within pyrimidine metabolism; CTP biosynthesis via de novo pathway; UDP from UMP (UMPK route): step 1/1. Its activity is regulated as follows. Inhibited by UTP. Functionally, catalyzes the reversible phosphorylation of UMP to UDP. This chain is Uridylate kinase, found in Psychrobacter arcticus (strain DSM 17307 / VKM B-2377 / 273-4).